The following is a 661-amino-acid chain: Meiotic coiled-coil protein 1 (661 aa).

Coiled-coil stretches lie at residues 38-78, 100-121, 143-184, 304-320, and 360-387; these read LDAL…IIEE, RAIY…ERLS, DIKL…LSIK, ELIQ…EVDL, and LKRL…DNEK. Disordered regions lie at residues 410 to 446, 467 to 562, and 573 to 592; these read QNQE…LRNI, LIDR…TPAS, and LSRT…TPTQ. Over residues 414-430 the composition is skewed to low complexity; that stretch reads NISSNDNSKSSPESSPP. Residues 436-445 show a composition bias toward basic and acidic residues; sequence GKIENKKLRN. 3 stretches are compositionally biased toward polar residues: residues 472-481, 548-562, and 582-592; these read VNQSPDTRSV, HNSV…TPAS, and FTNSLDDTPTQ.

This chain is Meiotic coiled-coil protein 1 (mcp1), found in Schizosaccharomyces pombe (strain 972 / ATCC 24843) (Fission yeast).